The following is a 135-amino-acid chain: uncharacterized protein (135 aa).

Positions 1 to 80 (MRSSSLPGAR…QRGSCASANA (80 aa)) are disordered. Residues 54-65 (GARGGGRRGWGG) show a composition bias toward gly residues.

This is an uncharacterized protein from Homo sapiens (Human).